The chain runs to 855 residues: MSLPKTPSTPLNSASTSESKKLVSVATEGTRGLPELKEKKNMVDRSKPLPTSLLNEFIPKEVLLSLTYAANAGPCPENLLPPKKIKTPKGTLPRLVDHVWHHPVRRNKFKYLIDHPVSLTGAGRDISFLYDVKYTKGQTREKAVCPPHLARSLQSHDGVIVPHKPKTLTDTLIPEEFHIVSSTGVSGLECYDDKYTTLLTDSENRLLLFPSMKPNKRVEVAQLNDVMDTMLERAGVENQEYTGPTKMHKLLHILKKEQTIYNTIFHELIRQVSVDCADRGELLSKVRERYVQMLDQIARQMIDFYKDLVTQRVMDQRILEELYNFKHVIEELTRELCLVRAHDVKLTKETEKAHKDLAQALLDAEKNAKMVEEYHDLYTLQRERMENDMKQLMAERDIWSSATYELALKVIERNRVILARRLYLNEKGWNKYTKHLIILLANKDTEDLALLQKLTQKWRNLVNKFKQEVEEMEESTRETLKIVEKGLTKWQESFNEKDILSPNNGNVFDSVILDFKQWQKMLNEKKEEFTGDVLLSKYDTLKIIKHLQENWTDIGLGIFNRHKSLEGELPSERQYMEEIIKNIQKLYKEYEIRINGDNGYSKILPILISSLDFCSFKLENLEFPDTPLEEWQEIDEKINEMKLQLDLLLNLTGIVPQHIDMDSVSVLQAYIFNMIQQWLLKIGNEINNGNIELQRHMDELHISMIQWMVNLLILMIPNFTDQDCLLKLEEESAEKHDIGVARLELDAIELTRKLYQYSRYLSSSCEGMVTAMALSKSTTSHRNATEDLYEVDKLKKECYEWINTCSCLLSNIKGRKITLLTYEEIEQLLEEEAVKEFIEPEMDESLLCSRRILLP.

Over residues 1–17 (MSLPKTPSTPLNSASTS) the composition is skewed to polar residues. A disordered region spans residues 1 to 31 (MSLPKTPSTPLNSASTSESKKLVSVATEGTR). Coiled coils occupy residues 316–402 (QRIL…WSSA), 451–480 (LQKLTQKWRNLVNKFKQEVEEMEESTRETL), and 571–596 (SERQYMEEIIKNIQKLYKEYEIRING).

The protein resides in the cytoplasm. In terms of biological role, may be essential for spermiogenesis and male fertility probably by regulating the manchette dynamics, spermatid head shaping and sperm flagellum assembly. The polypeptide is Axonemal dynein light chain domain-containing protein 1 (AXDND1) (Macaca fascicularis (Crab-eating macaque)).